A 65-amino-acid chain; its full sequence is Large ribosomal subunit protein uL29 (65 aa).

It belongs to the universal ribosomal protein uL29 family.

The protein is Large ribosomal subunit protein uL29 of Desulforapulum autotrophicum (strain ATCC 43914 / DSM 3382 / VKM B-1955 / HRM2) (Desulfobacterium autotrophicum).